A 109-amino-acid polypeptide reads, in one-letter code: Probable endoribonuclease MazF5 (109 aa).

It belongs to the PemK/MazF family. In terms of assembly, forms a complex with cognate antitoxin MazE5.

Its function is as follows. Toxic component of a type II toxin-antitoxin (TA) system. Upon expression in M.smegmatis inhibits colony formation. Its toxic effect is neutralized by coexpression with cognate antitoxin MazE5. Probably an endoribonuclease. The chain is Probable endoribonuclease MazF5 (mazF5) from Mycobacterium tuberculosis (strain ATCC 25618 / H37Rv).